A 331-amino-acid chain; its full sequence is UBX domain-containing protein 2B (331 aa).

2 stretches are compositionally biased toward basic and acidic residues: residues 1–16 (MAEGGRAEPEEQERGS) and 37–48 (DEMKCKSSKPDR). Residues 1-70 (MAEGGRAEPE…PHRLYSGDHK (70 aa)) are disordered. Residue Ala-2 is modified to N-acetylalanine. Position 56 is a phosphoserine (Ser-56). Thr-59 is subject to Phosphothreonine. Residue Ser-66 is modified to Phosphoserine. Positions 141-206 (DVQVLLKLWR…MEDHQDQEYI (66 aa)) constitute an SEP domain. Residues Ser-231, Ser-234, and Ser-235 each carry the phosphoserine modification. The 78-residue stretch at 252-329 (DSMPTTKIQI…DILNTVILQQ (78 aa)) folds into the UBX domain.

It belongs to the NSFL1C family. In terms of assembly, interacts with VCP. Does not bind ubiquitin.

Its subcellular location is the nucleus. The protein resides in the cytoplasm. It is found in the cytosol. The protein localises to the endoplasmic reticulum. It localises to the golgi apparatus. Its subcellular location is the cytoskeleton. The protein resides in the microtubule organizing center. It is found in the centrosome. Functionally, adapter protein required for Golgi and endoplasmic reticulum biogenesis. Involved in Golgi and endoplasmic reticulum maintenance during interphase and in their reassembly at the end of mitosis. The complex formed with VCP has membrane fusion activity; membrane fusion activity requires USO1-GOLGA2 tethering and BET1L. VCPIP1 is also required, but not its deubiquitinating activity. Together with NSFL1C/p47, regulates the centrosomal levels of kinase AURKA/Aurora A during mitotic progression by promoting AURKA removal from centrosomes in prophase. Also, regulates spindle orientation during mitosis. This Mus musculus (Mouse) protein is UBX domain-containing protein 2B (Ubxn2b).